Reading from the N-terminus, the 353-residue chain is ASPTSPKVFPLSLCSTQPDGDVVVACLVQGFFPQEPLSVTWSESGQGVTARNFPPSQDASGDLYTTSSQLTLPATQCPDGKSVTCHVNHYTNPSQDVTVPCRVPSTPPTPSPSTPPTPSPPCCHPRLSLHRPALEDLLLGSEANLTCTLTGLRDASGVTFTWTPSSGKSAVEGPPERDLCGCYSVSSVLPGCAEPWNHGKTFTCTAAYPESKTPLTATLSKSGNMFRPEVHLLPPPSEELALNELVTLTCLARGFSPKDVLVRWLQGSQELPREKYLTWASRQEPSQGTTTFAVTSILRVAAEDWKKGDTFSCMVGHEALPLAFTQKTIDRLAGKPTHVNVSVVMAEVDGTCY.

One can recognise an Ig-like 1 domain in the interval 6–98 (PKVFPLSLCS…HYTNPSQDVT (93 aa)). 2 cysteine pairs are disulfide-bonded: cysteine 26/cysteine 85 and cysteine 77/cysteine 101. Positions 96 to 121 (DVTVPCRVPSTPPTPSPSTPPTPSPP) are disordered. A compositionally biased stretch (pro residues) spans 105-121 (STPPTPSPSTPPTPSPP). 3 disulfide bridges follow: cysteine 123–cysteine 180, cysteine 147–cysteine 204, and cysteine 250–cysteine 313. Ig-like domains are found at residues 125–220 (PRLS…ATLS) and 228–330 (PEVH…KTID). N-linked (GlcNAc...) asparagine glycosylation is present at asparagine 144. A glycan (N-linked (GlcNAc...) asparagine) is linked at asparagine 340. 3-hydroxy-L-kynurenine is bound at residue cysteine 352.

In terms of assembly, monomeric or polymeric. In terms of processing, 3-Hydroxykynurenine, an oxidized tryptophan metabolite that is common in biological fluids, reacts with alpha-1-microglobulin to form heterogeneous polycyclic chromophores including hydroxanthommatin. The chromophore reacts with accessible cysteines forming non-reducible thioether cross-links with Ig alpha-1 chain C region Cys-352.

Its function is as follows. Ig alpha is the major immunoglobulin class in body secretions. It may serve both to defend against local infection and to prevent access of foreign antigens to the general immunologic system. The chain is Ig alpha-1 chain C region (IGHA1) from Gorilla gorilla gorilla (Western lowland gorilla).